The sequence spans 44 residues: Phosphatase RapA inhibitor (44 aa).

The propeptide occupies 1–39 (MKSKWMSGLLLVAVGFSFTQVMVHAGETANTEGKTFHIA).

This sequence belongs to the Phr family. As to quaternary structure, interacts with RapA and inhibits its interaction with Spo0F. Secreted with a propeptide domain, which is cleaved in the cell wall by the secreted serine proteases subtilisin and Vpr to produce a mature signaling peptide. Contains a predicted signal peptide cleavage site in the N-terminal region, however the propeptide is probably subject to only one processing event, at the N-terminal end of the mature peptide.

It localises to the secreted. The protein resides in the cytoplasm. Its activity is regulated as follows. Inhibition of RapA requires a free carboxylate group at the C-terminal end of the PhrA pentapeptide. A free C-terminal carboxylic acid PhrA pentapeptide inhibits RapA phosphatase activity at a 1:1 ratio and is approximately 200 fold more active than a C-terminal amide peptide. Signaling molecule involved in the regulation of sporulation. Secreted during production, but the mature peptide acts intracellularly, indicating that it needs to be imported into the cell to function. Inhibitor of the RapA phosphatase activity. Does not act on RapB. The polypeptide is Phosphatase RapA inhibitor (Bacillus subtilis (strain 168)).